The following is an 89-amino-acid chain: Small ribosomal subunit protein uS15 (89 aa).

Belongs to the universal ribosomal protein uS15 family. Part of the 30S ribosomal subunit. Forms a bridge to the 50S subunit in the 70S ribosome, contacting the 23S rRNA.

One of the primary rRNA binding proteins, it binds directly to 16S rRNA where it helps nucleate assembly of the platform of the 30S subunit by binding and bridging several RNA helices of the 16S rRNA. Its function is as follows. Forms an intersubunit bridge (bridge B4) with the 23S rRNA of the 50S subunit in the ribosome. The sequence is that of Small ribosomal subunit protein uS15 from Streptococcus thermophilus (strain CNRZ 1066).